A 115-amino-acid polypeptide reads, in one-letter code: uncharacterized protein (115 aa).

This sequence belongs to the herpesviridae BLRF2 family.

This is an uncharacterized protein from Saimiriine herpesvirus 2 (strain 11) (SaHV-2).